The following is a 213-amino-acid chain: MGKKTDNPETNNASSGAEEEEEEYAVEKILDRRVRKGKVEYYLKWKGYAETENTWEPEGNLDCQDLIQQYELSRKDEANAAASSSSSSSKKERPGSSTKVKETGRTSTTASNSSGSKRKSEEPAGPAGSKSKRVESEDTGDIVPAGGTGFDRGLEAEKILGASDNNGRLTFLIQFKGVDQAEMVPSTVANVKIPQMVIRFYEERLSWYSDNED.

Disordered regions lie at residues 1–24 and 74–151; these read MGKK…EEEY and RKDE…TGFD. Positions 24 to 82 constitute a Chromo 1 domain; that stretch reads YAVEKILDRRVRKGKVEYYLKWKGYAETENTWEPEGNLDCQDLIQQYELSRKDEANAAA. Residues 89–104 show a composition bias toward basic and acidic residues; the sequence is SKKERPGSSTKVKETG. Over residues 105–115 the composition is skewed to polar residues; that stretch reads RTSTTASNSSG. Residues 154-212 enclose the Chromo 2 domain; the sequence is LEAEKILGASDNNGRLTFLIQFKGVDQAEMVPSTVANVKIPQMVIRFYEERLSWYSDNE.

The protein resides in the nucleus. Functionally, structural component of heterochromatin, involved in gene repression and the modification of position-effect-variegation. Recognizes and binds histone H3 tails methylated at 'Lys-9', leading to epigenetic repression. In Drosophila virilis (Fruit fly), this protein is Heterochromatin protein 1 (HP1A).